We begin with the raw amino-acid sequence, 162 residues long: SsrA-binding protein (162 aa).

Belongs to the SmpB family.

Its subcellular location is the cytoplasm. Required for rescue of stalled ribosomes mediated by trans-translation. Binds to transfer-messenger RNA (tmRNA), required for stable association of tmRNA with ribosomes. tmRNA and SmpB together mimic tRNA shape, replacing the anticodon stem-loop with SmpB. tmRNA is encoded by the ssrA gene; the 2 termini fold to resemble tRNA(Ala) and it encodes a 'tag peptide', a short internal open reading frame. During trans-translation Ala-aminoacylated tmRNA acts like a tRNA, entering the A-site of stalled ribosomes, displacing the stalled mRNA. The ribosome then switches to translate the ORF on the tmRNA; the nascent peptide is terminated with the 'tag peptide' encoded by the tmRNA and targeted for degradation. The ribosome is freed to recommence translation, which seems to be the essential function of trans-translation. This is SsrA-binding protein from Sorangium cellulosum (strain So ce56) (Polyangium cellulosum (strain So ce56)).